We begin with the raw amino-acid sequence, 693 residues long: Polyribonucleotide nucleotidyltransferase (693 aa).

Asp485 and Asp491 together coordinate Mg(2+). The KH domain maps to 552–611 (PRIMVLEINPSKIGDLIGPSGKNIKKIIEETHTTINIKPEGLVYISAPDQESAEKAAQMV). An S1 motif domain is found at 621 to 691 (GDIFLGKVIR…SSGRISLTRK (71 aa)).

It belongs to the polyribonucleotide nucleotidyltransferase family. Mg(2+) is required as a cofactor.

It localises to the cytoplasm. The catalysed reaction is RNA(n+1) + phosphate = RNA(n) + a ribonucleoside 5'-diphosphate. Involved in mRNA degradation. Catalyzes the phosphorolysis of single-stranded polyribonucleotides processively in the 3'- to 5'-direction. This chain is Polyribonucleotide nucleotidyltransferase, found in Dictyoglomus thermophilum (strain ATCC 35947 / DSM 3960 / H-6-12).